The primary structure comprises 378 residues: Spermidine/putrescine import ATP-binding protein PotA (378 aa).

The region spanning 18–248 (VQLAGIRKCF…PKNLFVAGFI (231 aa)) is the ABC transporter domain. 50–57 (GPSGCGKT) provides a ligand contact to ATP.

It belongs to the ABC transporter superfamily. Spermidine/putrescine importer (TC 3.A.1.11.1) family. The complex is composed of two ATP-binding proteins (PotA), two transmembrane proteins (PotB and PotC) and a solute-binding protein (PotD).

It is found in the cell inner membrane. It carries out the reaction ATP + H2O + polyamine-[polyamine-binding protein]Side 1 = ADP + phosphate + polyamineSide 2 + [polyamine-binding protein]Side 1.. Its function is as follows. Part of the ABC transporter complex PotABCD involved in spermidine/putrescine import. Responsible for energy coupling to the transport system. The protein is Spermidine/putrescine import ATP-binding protein PotA of Shigella dysenteriae serotype 1 (strain Sd197).